A 373-amino-acid chain; its full sequence is tRNA-specific 2-thiouridylase MnmA (373 aa).

Residues 12 to 19 and Met-38 contribute to the ATP site; that span reads GMSGGVDS. The interval 98 to 100 is interaction with target base in tRNA; it reads NPD. Cys-103 functions as the Nucleophile in the catalytic mechanism. A disulfide bridge links Cys-103 with Cys-200. Residue Gly-127 coordinates ATP. Residues 150–152 form an interaction with tRNA region; it reads KDQ. Cys-200 serves as the catalytic Cysteine persulfide intermediate. The segment at 312–313 is interaction with tRNA; that stretch reads RY.

This sequence belongs to the MnmA/TRMU family.

Its subcellular location is the cytoplasm. The enzyme catalyses S-sulfanyl-L-cysteinyl-[protein] + uridine(34) in tRNA + AH2 + ATP = 2-thiouridine(34) in tRNA + L-cysteinyl-[protein] + A + AMP + diphosphate + H(+). Catalyzes the 2-thiolation of uridine at the wobble position (U34) of tRNA, leading to the formation of s(2)U34. The chain is tRNA-specific 2-thiouridylase MnmA from Streptococcus pneumoniae (strain CGSP14).